A 222-amino-acid polypeptide reads, in one-letter code: Peptide methionine sulfoxide reductase MsrA (222 aa).

Cys60 is an active-site residue.

This sequence belongs to the MsrA Met sulfoxide reductase family.

It carries out the reaction L-methionyl-[protein] + [thioredoxin]-disulfide + H2O = L-methionyl-(S)-S-oxide-[protein] + [thioredoxin]-dithiol. It catalyses the reaction [thioredoxin]-disulfide + L-methionine + H2O = L-methionine (S)-S-oxide + [thioredoxin]-dithiol. In terms of biological role, has an important function as a repair enzyme for proteins that have been inactivated by oxidation. Catalyzes the reversible oxidation-reduction of methionine sulfoxide in proteins to methionine. The chain is Peptide methionine sulfoxide reductase MsrA from Pseudomonas putida (strain W619).